The primary structure comprises 591 residues: Probable translation initiation factor IF-2 (591 aa).

The 217-residue stretch at 7–223 folds into the tr-type G domain; it reads LRTPIVCVMG…LLGLAQRFLE (217 aa). The tract at residues 16–23 is G1; the sequence is GHVDHGKT. 16–23 serves as a coordination point for GTP; sequence GHVDHGKT. The G2 stretch occupies residues 41-45; sequence AITQH. The interval 78-81 is G3; it reads DTPG. GTP contacts are provided by residues 78 to 82 and 132 to 135; these read DTPGH and NKID. Residues 132-135 form a G4 region; sequence NKID. The segment at 200–202 is G5; it reads SAI.

Belongs to the TRAFAC class translation factor GTPase superfamily. Classic translation factor GTPase family. IF-2 subfamily.

Function in general translation initiation by promoting the binding of the formylmethionine-tRNA to ribosomes. Seems to function along with eIF-2. This Methanococcoides burtonii (strain DSM 6242 / NBRC 107633 / OCM 468 / ACE-M) protein is Probable translation initiation factor IF-2.